A 307-amino-acid polypeptide reads, in one-letter code: Voltage-dependent anion channel-forming protein sll1024 (307 aa).

The next 4 helical transmembrane spans lie at 26–46, 54–74, 226–246, and 247–267; these read VIPA…GVTL, FSIP…LLVF, LIFL…HWAT, and AFVV…GVEI.

This sequence belongs to the anion channel-forming bestrophin (TC 1.A.46) family.

The protein localises to the cell membrane. This chain is Voltage-dependent anion channel-forming protein sll1024, found in Synechocystis sp. (strain ATCC 27184 / PCC 6803 / Kazusa).